A 201-amino-acid chain; its full sequence is LexA repressor 1 (201 aa).

Positions 27–47 (LAEIAQAFGFASRNAAQKHVQ) form a DNA-binding region, H-T-H motif. Residues S122 and K159 each act as for autocatalytic cleavage activity in the active site.

The protein belongs to the peptidase S24 family. In terms of assembly, homodimer.

It catalyses the reaction Hydrolysis of Ala-|-Gly bond in repressor LexA.. Its function is as follows. Represses a number of genes involved in the response to DNA damage (SOS response), including recA and lexA. In the presence of single-stranded DNA, RecA interacts with LexA causing an autocatalytic cleavage which disrupts the DNA-binding part of LexA, leading to derepression of the SOS regulon and eventually DNA repair. This chain is LexA repressor 1, found in Xanthomonas campestris pv. campestris (strain ATCC 33913 / DSM 3586 / NCPPB 528 / LMG 568 / P 25).